A 436-amino-acid chain; its full sequence is ATP-dependent RNA helicase SUB2 (436 aa).

Positions 1–16 (MSAEEDLIDYSDEELN) are enriched in acidic residues. The interval 1 to 33 (MSAEEDLIDYSDEELNTNETAAPAADSNGKKGE) is disordered. The Q motif signature appears at 52-80 (TGFRDFLLKPELLRAIGDCGFEHPSEVQQ). One can recognise a Helicase ATP-binding domain in the interval 83 to 258 (IPQAMLGGDI…KKFMQNPTEH (176 aa)). 96-103 (AKSGLGKT) contacts ATP. A DEAD box motif is present at residues 205 to 208 (DECD). The region spanning 270–431 (GLQQYFVALE…EFPKDGIDAS (162 aa)) is the Helicase C-terminal domain.

This sequence belongs to the DEAD box helicase family. DECD subfamily.

Its subcellular location is the nucleus. The enzyme catalyses ATP + H2O = ADP + phosphate + H(+). In terms of biological role, ATP-binding RNA helicase involved in transcription elongation and required for the export of mRNA out of the nucleus. SUB2 also plays a role in pre-mRNA splicing and spliceosome assembly. May be involved in rDNA and telomeric silencing, and maintenance of genome integrity. In Pyricularia oryzae (strain 70-15 / ATCC MYA-4617 / FGSC 8958) (Rice blast fungus), this protein is ATP-dependent RNA helicase SUB2 (SUB2).